The following is a 520-amino-acid chain: Fumarate hydratase, mitochondrial (520 aa).

Residues 1-39 (MASVAHISTAKAIFRAGGLPCRRLITPTLTGLPLKTHRM) constitute a mitochondrion transit peptide. Substrate-binding positions include 153–155 (SGT), 184–187 (HPND), 194–196 (SSN), and Thr242. His243 acts as the Proton donor/acceptor in catalysis. Ser373 is a catalytic residue. Residues Ser374 and 379–381 (KVN) each bind substrate.

It belongs to the class-II fumarase/aspartase family. Fumarase subfamily. Homotetramer.

It is found in the mitochondrion matrix. It localises to the cytoplasm. The protein resides in the nucleus. The enzyme catalyses (S)-malate = fumarate + H2O. The protein operates within carbohydrate metabolism; tricarboxylic acid cycle; (S)-malate from fumarate: step 1/1. Functionally, catalyzes the reversible stereospecific interconversion of fumarate to L-malate. In mitochondrion, catalyzes the hydration of fumarate to L-malate in the tricarboxylic acid (TCA) cycle to facilitate a transition step in the production of energy in the form of NADH. In cytoplasm and nucleus, involved in DNA repair in response to DNA damage: following DNA double-strand breaks (DSBs), translocates from the cytosol to the nucleus and promotes DNA repair by catalyzing the dehydration of L-malate to fumarate. This Schizosaccharomyces pombe (strain 972 / ATCC 24843) (Fission yeast) protein is Fumarate hydratase, mitochondrial (fum1).